A 219-amino-acid polypeptide reads, in one-letter code: Transmembrane protein 179B (219 aa).

Transmembrane regions (helical) follow at residues 9 to 29, 65 to 85, 96 to 116, and 167 to 187; these read VELA…AAMT, FVAG…LFWI, GAIG…LVLV, and TSSW…VVQW. Residues 198–219 form a disordered region; the sequence is ERGDPEWSSETDALVGSRLSHS. Phosphoserine is present on residues S206 and S214.

Belongs to the TMEM179 family.

Its subcellular location is the membrane. The sequence is that of Transmembrane protein 179B (TMEM179B) from Homo sapiens (Human).